A 2617-amino-acid polypeptide reads, in one-letter code: Non-reducing polyketide synthase epaA (2617 aa).

Residues proline 95–glutamine 231 are N-terminal acylcarrier protein transacylase domain (SAT). The active-site Nucleophile; for transacylase activity is cysteine 132. Histidine 250 serves as the catalytic Proton donor/acceptor; for transacylase activity. Residues proline 372 to glutamine 790 form the Ketosynthase family 3 (KS3) domain. Residues cysteine 539, histidine 674, and histidine 713 each act as for beta-ketoacyl synthase activity in the active site. Residues phenylalanine 902 to glycine 1193 are malonyl-CoA:ACP transacylase (MAT) domain. The N-terminal hotdog fold stretch occupies residues proline 1282–aspartate 1413. The 310-residue stretch at proline 1282 to serine 1591 folds into the PKS/mFAS DH domain. A product template (PT) domain region spans residues leucine 1310–serine 1589. The Proton acceptor; for dehydratase activity role is filled by histidine 1314. The segment at alanine 1443 to serine 1591 is C-terminal hotdog fold. Aspartate 1499 serves as the catalytic Proton donor; for dehydratase activity. The disordered stretch occupies residues threonine 1600–alanine 1651. Low complexity predominate over residues alanine 1602 to arginine 1619. The 75-residue stretch at glutamine 1653–valine 1727 folds into the Carrier domain. Serine 1687 is modified (O-(pantetheine 4'-phosphoryl)serine). The disordered stretch occupies residues glycine 1728–threonine 1799. Residues leucine 1750–aspartate 1766 are compositionally biased toward low complexity. The span at leucine 1769 to threonine 1785 shows a compositional bias: polar residues. The interval aspartate 1970–aspartate 2158 is methyltransferase domain. Residues isoleucine 2240 to alanine 2485 form an NADPH-binding (R) domain region.

The cofactor is pantetheine 4'-phosphate.

Its pathway is secondary metabolite biosynthesis. Functionally, non-reducing polyketide synthase; part of the gene cluster that mediates the biosynthesis of nigerpyrone and its derivatives carbonarone A and pestalamide A. The biosynthesis pathway begins with the polyketide assembly by epaA to form phenylacetyl triketide precursor from successive condensation of two malonyl-CoA, presumably with one phenylacetyl-CoA starter unit produced by the phenylacetyl-CoA ligase epaB. For the nigerpyrone biosynthesis, the reactive polyketide chain is released as an aldehyde through the R-domain. A nonenzymatic cyclization and dehydration may create nigerpyrone. For the biosynthesis of carbonarone A and pestalamide A, an extra methyl group is added through the C-methyltransferase domain. Several further steps involving the dehydrogenase orf1, the cytochrome P450 monooxygenase orf2 and the FAD-dependent monooxygenase orf3 are required to form a carbonarone A precursor which is converted to carbonarone A via cyclization. The O-acetyltransferase epaC could catalyze the transfer of 2-methylsuccinyl-CoA, a common intermediate in the ethylmalonyl-CoA pathway, to generate the final product pestalamide A. The chain is Non-reducing polyketide synthase epaA from Aspergillus niger (strain ATCC MYA-4892 / CBS 513.88 / FGSC A1513).